A 101-amino-acid polypeptide reads, in one-letter code: Pterin-4-alpha-carbinolamine dehydratase (101 aa).

This sequence belongs to the pterin-4-alpha-carbinolamine dehydratase family.

It carries out the reaction (4aS,6R)-4a-hydroxy-L-erythro-5,6,7,8-tetrahydrobiopterin = (6R)-L-erythro-6,7-dihydrobiopterin + H2O. This is Pterin-4-alpha-carbinolamine dehydratase (Pcd) from Drosophila virilis (Fruit fly).